Here is a 214-residue protein sequence, read N- to C-terminus: Adenylate kinase (214 aa).

10 to 15 (GAGKGT) provides a ligand contact to ATP. The interval 30-59 (STGDMLRAAVKAGTPLGLEAKKVMDAGQLV) is NMP. Residues T31, R36, 57-59 (QLV), 85-88 (GFPR), and Q92 each bind AMP. An LID region spans residues 122–159 (GRRVHPGSGRVYHVVFNPPKVEGKDDVTGEDLAIRPDD). Residues R123 and 132-133 (VY) each bind ATP. Residues R156 and R167 each coordinate AMP. ATP is bound at residue Q200.

Belongs to the adenylate kinase family. As to quaternary structure, monomer.

The protein localises to the cytoplasm. The catalysed reaction is AMP + ATP = 2 ADP. The protein operates within purine metabolism; AMP biosynthesis via salvage pathway; AMP from ADP: step 1/1. Its function is as follows. Catalyzes the reversible transfer of the terminal phosphate group between ATP and AMP. Plays an important role in cellular energy homeostasis and in adenine nucleotide metabolism. In Shewanella putrefaciens (strain CN-32 / ATCC BAA-453), this protein is Adenylate kinase.